The sequence spans 484 residues: Serine hydroxymethyltransferase, cytosolic (484 aa).

The residue at position 2 (alanine 2) is an N-acetylalanine. Asparagine 6 carries the post-translational modification Deamidated asparagine; alternate. Positions 6-7 form a cross-link, isoaspartyl glycine isopeptide (Asn-Gly); alternate; the sequence is NG. Catalysis depends on cysteine 204, which acts as the Nucleophile. Histidine 256 (proton donor) is an active-site residue. The residue at position 257 (lysine 257) is an N6-(pyridoxal phosphate)lysine.

The protein belongs to the SHMT family. As to quaternary structure, homotetramer. Identified in complex with ABRAXAS2 and the other subunits of the BRISC complex, at least composed of ABRAXAS2, BRCC3/BRCC36, BABAM2 and BABAM1/NBA1. The cofactor is pyridoxal 5'-phosphate. Deamidation of asparagine produces alternatively aspartate or isoaspartate, which in turn can be converted to aspartate through carboxylmethylation/demethylation.

It localises to the cytoplasm. It catalyses the reaction (6R)-5,10-methylene-5,6,7,8-tetrahydrofolate + glycine + H2O = (6S)-5,6,7,8-tetrahydrofolate + L-serine. Its pathway is one-carbon metabolism; tetrahydrofolate interconversion. In terms of biological role, interconversion of serine and glycine. This chain is Serine hydroxymethyltransferase, cytosolic (SHMT1), found in Oryctolagus cuniculus (Rabbit).